The chain runs to 244 residues: Cell division protein DivIB (244 aa).

Topologically, residues 1–6 (MKIKWP) are cytoplasmic. Residues 7–27 (LQLWISLAVFVTIAVGTLLLL) form a helical membrane-spanning segment. Positions 28–104 (QPWQTIKTVT…IDIAEKVTAG (77 aa)) constitute a POTRA domain. Residues 28–244 (QPWQTIKTVT…KADNKAHQKQ (217 aa)) are Extracellular-facing.

Belongs to the FtsQ/DivIB family. DivIB subfamily.

It localises to the cell membrane. Cell division protein that may be involved in stabilizing or promoting the assembly of the division complex. The protein is Cell division protein DivIB of Leuconostoc kimchii (strain IMSNU 11154 / KCTC 2386 / IH25).